A 641-amino-acid polypeptide reads, in one-letter code: 1-phosphatidylinositol 4,5-bisphosphate phosphodiesterase zeta-1 (641 aa).

Positions 35–70 (CSYIHVKRIFKDNDRLKQGRITIEEFRAIYRILTHR) constitute an EF-hand domain. Positions 155-299 (QDMTHPLNDY…LKFKVLVKNK (145 aa)) constitute a PI-PLC X-box domain. Active-site residues include His170 and His215. The PI-PLC Y-box domain maps to 382–498 (LSDLVIYTKA…GYILKPHFLR (117 aa)). The 125-residue stretch at 498-622 (RESESYFNPS…KGYRRVPLFS (125 aa)) folds into the C2 domain.

As to quaternary structure, interacts via its C2 domain with PtdIns(3)P and, to a lesser extent, PtdIns(5)P in vitro. It depends on Ca(2+) as a cofactor.

It is found in the nucleus. The protein resides in the cytoplasm. It localises to the perinuclear region. The catalysed reaction is a 1,2-diacyl-sn-glycero-3-phospho-(1D-myo-inositol-4,5-bisphosphate) + H2O = 1D-myo-inositol 1,4,5-trisphosphate + a 1,2-diacyl-sn-glycerol + H(+). The production of the second messenger molecules diacylglycerol (DAG) and inositol 1,4,5-trisphosphate (IP3) is mediated by activated phosphatidylinositol-specific phospholipase C enzymes. In vitro, hydrolyzes PtdIns(4,5)P2 in a Ca(2+)-dependent manner. Triggers intracellular Ca(2+) oscillations in oocytes solely during M phase and is involved in inducing oocyte activation and initiating embryonic development up to the blastocyst stage. Is therefore a strong candidate for the egg-activating soluble sperm factor that is transferred from the sperm into the egg cytoplasm following gamete membrane fusion. May exert an inhibitory effect on phospholipase-C-coupled processes that depend on calcium ions and protein kinase C, including CFTR trafficking and function. This chain is 1-phosphatidylinositol 4,5-bisphosphate phosphodiesterase zeta-1, found in Macaca fascicularis (Crab-eating macaque).